A 156-amino-acid chain; its full sequence is Homeobox-leucine zipper protein ATHB-52 (156 aa).

Positions Gly-8–Ser-67 form a DNA-binding region, homeobox. The tract at residues Leu-68 to Leu-96 is leucine-zipper.

This sequence belongs to the HD-ZIP homeobox family. Class I subfamily. In terms of tissue distribution, expressed in roots and flowers.

Its subcellular location is the nucleus. Its function is as follows. Probable transcription factor. This chain is Homeobox-leucine zipper protein ATHB-52 (ATHB-52), found in Arabidopsis thaliana (Mouse-ear cress).